We begin with the raw amino-acid sequence, 180 residues long: ATP synthase subunit delta (180 aa).

It belongs to the ATPase delta chain family. In terms of assembly, F-type ATPases have 2 components, F(1) - the catalytic core - and F(0) - the membrane proton channel. F(1) has five subunits: alpha(3), beta(3), gamma(1), delta(1), epsilon(1). CF(0) has four main subunits: a(1), b(1), b'(1) and c(10-14). The alpha and beta chains form an alternating ring which encloses part of the gamma chain. F(1) is attached to F(0) by a central stalk formed by the gamma and epsilon chains, while a peripheral stalk is formed by the delta, b and b' chains.

It localises to the cellular thylakoid membrane. F(1)F(0) ATP synthase produces ATP from ADP in the presence of a proton or sodium gradient. F-type ATPases consist of two structural domains, F(1) containing the extramembraneous catalytic core and F(0) containing the membrane proton channel, linked together by a central stalk and a peripheral stalk. During catalysis, ATP synthesis in the catalytic domain of F(1) is coupled via a rotary mechanism of the central stalk subunits to proton translocation. Its function is as follows. This protein is part of the stalk that links CF(0) to CF(1). It either transmits conformational changes from CF(0) to CF(1) or is implicated in proton conduction. The protein is ATP synthase subunit delta of Prochlorococcus marinus subsp. pastoris (strain CCMP1986 / NIES-2087 / MED4).